Consider the following 298-residue polypeptide: GTP cyclohydrolase FolE2 (298 aa).

Belongs to the GTP cyclohydrolase IV family.

The catalysed reaction is GTP + H2O = 7,8-dihydroneopterin 3'-triphosphate + formate + H(+). Its pathway is cofactor biosynthesis; 7,8-dihydroneopterin triphosphate biosynthesis; 7,8-dihydroneopterin triphosphate from GTP: step 1/1. Converts GTP to 7,8-dihydroneopterin triphosphate. This is GTP cyclohydrolase FolE2 from Pseudomonas aeruginosa (strain UCBPP-PA14).